The chain runs to 348 residues: UDP-3-O-acylglucosamine N-acyltransferase (348 aa).

Histidine 237 functions as the Proton acceptor in the catalytic mechanism.

Belongs to the transferase hexapeptide repeat family. LpxD subfamily. In terms of assembly, homotrimer.

The catalysed reaction is a UDP-3-O-[(3R)-3-hydroxyacyl]-alpha-D-glucosamine + a (3R)-hydroxyacyl-[ACP] = a UDP-2-N,3-O-bis[(3R)-3-hydroxyacyl]-alpha-D-glucosamine + holo-[ACP] + H(+). Its pathway is bacterial outer membrane biogenesis; LPS lipid A biosynthesis. In terms of biological role, catalyzes the N-acylation of UDP-3-O-acylglucosamine using 3-hydroxyacyl-ACP as the acyl donor. Is involved in the biosynthesis of lipid A, a phosphorylated glycolipid that anchors the lipopolysaccharide to the outer membrane of the cell. The polypeptide is UDP-3-O-acylglucosamine N-acyltransferase (Geotalea daltonii (strain DSM 22248 / JCM 15807 / FRC-32) (Geobacter daltonii)).